A 130-amino-acid chain; its full sequence is Large ribosomal subunit protein uL22 (130 aa).

It belongs to the universal ribosomal protein uL22 family. Part of the 50S ribosomal subunit.

Its function is as follows. This protein binds specifically to 23S rRNA; its binding is stimulated by other ribosomal proteins, e.g. L4, L17, and L20. It is important during the early stages of 50S assembly. It makes multiple contacts with different domains of the 23S rRNA in the assembled 50S subunit and ribosome. Functionally, the globular domain of the protein is located near the polypeptide exit tunnel on the outside of the subunit, while an extended beta-hairpin is found that lines the wall of the exit tunnel in the center of the 70S ribosome. In Clavibacter michiganensis subsp. michiganensis (strain NCPPB 382), this protein is Large ribosomal subunit protein uL22.